A 362-amino-acid polypeptide reads, in one-letter code: Phosphoserine aminotransferase (362 aa).

Residues Ser9 and Arg42 each contribute to the L-glutamate site. Pyridoxal 5'-phosphate is bound by residues 76–77 (AR), Trp102, Thr153, Asp174, and Gln197. N6-(pyridoxal phosphate)lysine is present on Lys198. 239-240 (NT) serves as a coordination point for pyridoxal 5'-phosphate.

Belongs to the class-V pyridoxal-phosphate-dependent aminotransferase family. SerC subfamily. As to quaternary structure, homodimer. The cofactor is pyridoxal 5'-phosphate.

It is found in the cytoplasm. The enzyme catalyses O-phospho-L-serine + 2-oxoglutarate = 3-phosphooxypyruvate + L-glutamate. The catalysed reaction is 4-(phosphooxy)-L-threonine + 2-oxoglutarate = (R)-3-hydroxy-2-oxo-4-phosphooxybutanoate + L-glutamate. It participates in amino-acid biosynthesis; L-serine biosynthesis; L-serine from 3-phospho-D-glycerate: step 2/3. Its pathway is cofactor biosynthesis; pyridoxine 5'-phosphate biosynthesis; pyridoxine 5'-phosphate from D-erythrose 4-phosphate: step 3/5. In terms of biological role, catalyzes the reversible conversion of 3-phosphohydroxypyruvate to phosphoserine and of 3-hydroxy-2-oxo-4-phosphonooxybutanoate to phosphohydroxythreonine. The sequence is that of Phosphoserine aminotransferase from Photorhabdus laumondii subsp. laumondii (strain DSM 15139 / CIP 105565 / TT01) (Photorhabdus luminescens subsp. laumondii).